The chain runs to 680 residues: DNA ligase 1 (680 aa).

NAD(+)-binding positions include 35–39 (DAEYD), 84–85 (SL), and Asp-115. Lys-117 acts as the N6-AMP-lysine intermediate in catalysis. Residues Arg-138, Glu-175, Lys-295, and Lys-319 each contribute to the NAD(+) site. The Zn(2+) site is built by Cys-413, Cys-416, Cys-431, and Cys-436. One can recognise a BRCT domain in the interval 599–680 (REGSQLQGLK…FANLLKGLDR (82 aa)).

It belongs to the NAD-dependent DNA ligase family. LigA subfamily. Mg(2+) serves as cofactor. It depends on Mn(2+) as a cofactor.

It catalyses the reaction NAD(+) + (deoxyribonucleotide)n-3'-hydroxyl + 5'-phospho-(deoxyribonucleotide)m = (deoxyribonucleotide)n+m + AMP + beta-nicotinamide D-nucleotide.. Functionally, DNA ligase that catalyzes the formation of phosphodiester linkages between 5'-phosphoryl and 3'-hydroxyl groups in double-stranded DNA using NAD as a coenzyme and as the energy source for the reaction. It is essential for DNA replication and repair of damaged DNA. This Nitratidesulfovibrio vulgaris (strain DP4) (Desulfovibrio vulgaris) protein is DNA ligase 1.